The sequence spans 324 residues: Kelch domain-containing protein PF0436 (324 aa).

Kelch repeat units follow at residues 112 to 160 (EVLL…LWDG), 254 to 301 (GIYI…WDGR), and 303 to 323 (IYIV…FTPK).

This Pyrococcus furiosus (strain ATCC 43587 / DSM 3638 / JCM 8422 / Vc1) protein is Kelch domain-containing protein PF0436.